Consider the following 137-residue polypeptide: uncharacterized protein (137 aa).

This sequence belongs to the ycf72 family.

The protein resides in the plastid. It localises to the chloroplast. This is an uncharacterized protein from Oryza nivara (Indian wild rice).